Reading from the N-terminus, the 587-residue chain is Calcium/calmodulin-dependent protein kinase kinase 2 (587 aa).

Over residues 1-11 (MSSCVSSQPTS) the composition is skewed to polar residues. Disordered regions lie at residues 1–32 (MSSC…SQKP) and 74–115 (EADG…SSLD). Position 2 is an N-acetylserine (Ser-2). Residues Ser-99, Ser-113, Ser-128, Ser-132, and Ser-136 each carry the phosphoserine modification. Residues 101 to 115 (QERSQGGPASSSSLD) show a composition bias toward polar residues. A Protein kinase domain is found at 164-445 (YTLKDEIGKG…VPEIKLHPWV (282 aa)). Residues 170-178 (IGKGSYGVV) and Lys-193 contribute to the ATP site. Residues 203-225 (QAGFPRRPPPRGTRPAPGGCIQP) are RP domain. The interval 204–224 (AGFPRRPPPRGTRPAPGGCIQ) is disordered. The active-site Proton acceptor is the Asp-311. Positions 471–476 (ENSVKH) are autoinhibitory domain. The calmodulin-binding stretch occupies residues 474 to 499 (VKHIPSLATVILVKTMIRKRSFGNPF). Ser-494 and Ser-510 each carry phosphoserine. The interval 496–587 (GNPFEGSRRE…QQPEEAMEPE (92 aa)) is disordered. Over residues 520–535 (PTREWEPLSEPKEARQ) the composition is skewed to basic and acidic residues. Positions 569-579 (PGSPPRTPPQQ) are enriched in pro residues. At Ser-571 the chain carries Phosphoserine.

It belongs to the protein kinase superfamily. Ser/Thr protein kinase family. Interacts with calmodulin. Phosphorylated by PKA. Each isoform may show a different pattern of phosphorylation. Autophosphorylated. In terms of tissue distribution, mainly expressed in brain, but detected in all tissues tested (at protein level). In the brain, isoform 1 may be predominant. with high levels in the cerebellum and hippocampus, although isoform 3 is detectable. Isoform 3 is also expressed in lung.

The protein resides in the nucleus. It localises to the cytoplasm. The protein localises to the cell projection. It is found in the neuron projection. The enzyme catalyses L-seryl-[protein] + ATP = O-phospho-L-seryl-[protein] + ADP + H(+). The catalysed reaction is L-threonyl-[protein] + ATP = O-phospho-L-threonyl-[protein] + ADP + H(+). Activated by Ca(2+)/calmodulin. Binding of calmodulin may relieve intrasteric autoinhibition. Autophosphorylation does not alter activity or regulation by Ca(2+)/calmodulin. In part, activity is independent on Ca(2+)/calmodulin. Functionally, calcium/calmodulin-dependent protein kinase belonging to a proposed calcium-triggered signaling cascade involved in a number of cellular processes. Phosphorylates CAMK1 and CAMK4. Phosphorylates CAMK1D. Seems to be involved in hippocampal activation of CREB1. Efficiently phosphorylates 5'-AMP-activated protein kinase (AMPK) trimer, including that consisting of PRKAA1, PRKAB1 and PRKAG1. This phosphorylation is stimulated in response to Ca(2+) signals. May play a role in neurite growth. Isoform 2 may promote neurite elongation, while isoform 1 may promoter neurite branching. The protein is Calcium/calmodulin-dependent protein kinase kinase 2 (Camkk2) of Rattus norvegicus (Rat).